We begin with the raw amino-acid sequence, 262 residues long: uncharacterized protein (262 aa).

This is an uncharacterized protein from Mycobacterium tuberculosis (strain CDC 1551 / Oshkosh).